We begin with the raw amino-acid sequence, 120 residues long: Accessory gland protein Acp53Ea (120 aa).

The first 23 residues, 1-23 (MKLIKVTLVFSLLALVFVAQTEA), serve as a signal peptide directing secretion.

Main cells of accessory gland and seminal fluid.

The protein localises to the secreted. In terms of biological role, responsible for physiological and behavioral changes in mated female flies. The sequence is that of Accessory gland protein Acp53Ea (Acp53Ea) from Drosophila melanogaster (Fruit fly).